A 40-amino-acid polypeptide reads, in one-letter code: Photosystem II reaction center protein J (40 aa).

Residues 8-28 (IPLWLVALVAGTGVLVVVGLF) traverse the membrane as a helical segment.

Belongs to the PsbJ family. In terms of assembly, PSII is composed of 1 copy each of membrane proteins PsbA, PsbB, PsbC, PsbD, PsbE, PsbF, PsbH, PsbI, PsbJ, PsbK, PsbL, PsbM, PsbT, PsbX, PsbY, PsbZ, Psb30/Ycf12, peripheral proteins PsbO, CyanoQ (PsbQ), PsbU, PsbV and a large number of cofactors. It forms dimeric complexes.

It is found in the cellular thylakoid membrane. In terms of biological role, one of the components of the core complex of photosystem II (PSII). PSII is a light-driven water:plastoquinone oxidoreductase that uses light energy to abstract electrons from H(2)O, generating O(2) and a proton gradient subsequently used for ATP formation. It consists of a core antenna complex that captures photons, and an electron transfer chain that converts photonic excitation into a charge separation. This chain is Photosystem II reaction center protein J, found in Trichodesmium erythraeum (strain IMS101).